The sequence spans 777 residues: Endonuclease MutS2 (777 aa).

328-335 (GPNTGGKT) contributes to the ATP binding site. Residues 702–777 (LDLRGKRYEE…GSGCTIATLG (76 aa)) form the Smr domain.

This sequence belongs to the DNA mismatch repair MutS family. MutS2 subfamily. As to quaternary structure, homodimer. Binds to stalled ribosomes, contacting rRNA.

In terms of biological role, endonuclease that is involved in the suppression of homologous recombination and thus may have a key role in the control of bacterial genetic diversity. Functionally, acts as a ribosome collision sensor, splitting the ribosome into its 2 subunits. Detects stalled/collided 70S ribosomes which it binds and splits by an ATP-hydrolysis driven conformational change. Acts upstream of the ribosome quality control system (RQC), a ribosome-associated complex that mediates the extraction of incompletely synthesized nascent chains from stalled ribosomes and their subsequent degradation. Probably generates substrates for RQC. The polypeptide is Endonuclease MutS2 (Streptococcus uberis (strain ATCC BAA-854 / 0140J)).